A 29-amino-acid polypeptide reads, in one-letter code: Dermaseptin-J5 (29 aa).

A Valine amide modification is found at Val-29.

In terms of tissue distribution, expressed by the skin glands.

It localises to the secreted. Functionally, has antimicrobial activity. The sequence is that of Dermaseptin-J5 from Phasmahyla jandaia (Jandaia leaf frog).